We begin with the raw amino-acid sequence, 155 residues long: Ribosome maturation factor RimP (155 aa).

This sequence belongs to the RimP family.

It localises to the cytoplasm. Functionally, required for maturation of 30S ribosomal subunits. This Listeria monocytogenes serotype 4b (strain CLIP80459) protein is Ribosome maturation factor RimP.